A 257-amino-acid chain; its full sequence is Ubiquinone biosynthesis O-methyltransferase (257 aa).

The S-adenosyl-L-methionine site is built by Arg-43, Gly-77, Asp-98, and Met-144.

This sequence belongs to the methyltransferase superfamily. UbiG/COQ3 family.

The enzyme catalyses a 3-demethylubiquinol + S-adenosyl-L-methionine = a ubiquinol + S-adenosyl-L-homocysteine + H(+). It catalyses the reaction a 3-(all-trans-polyprenyl)benzene-1,2-diol + S-adenosyl-L-methionine = a 2-methoxy-6-(all-trans-polyprenyl)phenol + S-adenosyl-L-homocysteine + H(+). It functions in the pathway cofactor biosynthesis; ubiquinone biosynthesis. In terms of biological role, O-methyltransferase that catalyzes the 2 O-methylation steps in the ubiquinone biosynthetic pathway. The chain is Ubiquinone biosynthesis O-methyltransferase from Psychrobacter arcticus (strain DSM 17307 / VKM B-2377 / 273-4).